The sequence spans 1011 residues: Probable beta-galactosidase E (1011 aa).

The signal sequence occupies residues 1–19; sequence MKSLLKRLIALAAAYSVAA. Substrate contacts are provided by Y92, N136, A137, E138, and N195. E196 functions as the Proton donor in the catalytic mechanism. N202 carries an N-linked (GlcNAc...) asparagine glycan. Y261 contributes to the substrate binding site. An intrachain disulfide couples C267 to C316. E299 functions as the Nucleophile in the catalytic mechanism. Residue Y365 coordinates substrate. N-linked (GlcNAc...) asparagine glycosylation is found at N406, N423, N446, N455, N588, N622, N704, N745, N759, N772, N778, and N913.

This sequence belongs to the glycosyl hydrolase 35 family.

The protein resides in the secreted. It catalyses the reaction Hydrolysis of terminal non-reducing beta-D-galactose residues in beta-D-galactosides.. In terms of biological role, cleaves beta-linked terminal galactosyl residues from gangliosides, glycoproteins, and glycosaminoglycans. This chain is Probable beta-galactosidase E (lacE), found in Aspergillus fumigatus (strain CBS 144.89 / FGSC A1163 / CEA10) (Neosartorya fumigata).